A 542-amino-acid chain; its full sequence is Importin subunit alpha (542 aa).

Methionine 1 bears the N-acetylmethionine mark. The span at 1–11 (MDNGTDSSTSK) shows a compositional bias: polar residues. Residues 1-65 (MDNGTDSSTS…RNFIPPTDGA (65 aa)) enclose the IBB domain. The segment at 1–77 (MDNGTDSSTS…DEEDESSVSA (77 aa)) is disordered. Basic and acidic residues predominate over residues 27–53 (FSADELRRRRDTQQVELRKAKRDEALA). Residues 89–122 (LPQMTQQLNSDDMQEQLSATVKFRQILSREHRPP) form an ARM 1; truncated repeat. 8 ARM repeats span residues 123–162 (IDVV…ASGT), 163–204 (SAQT…AGDS), 205–251 (TDYR…PQPD), 252–288 (WSVV…SDGP), 289–330 (QEAI…VTGN), 331–372 (DLQT…TAGN), 373–417 (TEQI…GLQR), and 418–471 (PDII…LNIN). The NLS binding site 1 stretch occupies residues 209-335 (DYVLQCNAME…IVTGNDLQTQ (127 aa)). The segment at 419 to 505 (DIIRYLVSQG…KIYEKAYKII (87 aa)) is NLS binding site 2. The ARM 10; atypical repeat unit spans residues 472–508 (ENADFIEKAGGMEKIFNCQQNENDKIYEKAYKIIETY).

The protein belongs to the importin alpha family. As to quaternary structure, forms a complex with an importin beta subunit. In the nucleus, interacts with NUP2 which accelerate release of NLSs, NUP2 is subsequently displaced by CSE1:RanGTP which mediates re-export and recycling. Interacts with HEH2, SHE2, and STS1.

It localises to the cytoplasm. The protein localises to the perinuclear region. Functions in nuclear protein import as an adapter protein for importin beta nuclear receptors. Binds specifically and directly to substrates containing either a simple or bipartite NLS motif. Promotes docking of import substrates to the nuclear envelope. Together with importin beta KAP95, mediates nuclear import of transcription factor GCN4. Together with tethering factor STS1, targets the proteasome to the nucleus. The chain is Importin subunit alpha (SRP1) from Saccharomyces cerevisiae (strain ATCC 204508 / S288c) (Baker's yeast).